A 183-amino-acid polypeptide reads, in one-letter code: Dual-action ribosomal maturation protein DarP (183 aa).

The protein belongs to the DarP family.

Its subcellular location is the cytoplasm. Member of a network of 50S ribosomal subunit biogenesis factors which assembles along the 30S-50S interface, preventing incorrect 23S rRNA structures from forming. Promotes peptidyl transferase center (PTC) maturation. In Shigella flexneri serotype 5b (strain 8401), this protein is Dual-action ribosomal maturation protein DarP.